The sequence spans 887 residues: Centrobin (887 aa).

The disordered stretch occupies residues 1–34 (MATAAPSPSSPLRPEDLLSDSSEPPGLNQVSSEV). S81 carries the post-translational modification Phosphoserine. Disordered regions lie at residues 110 to 153 (MLHT…PSSS), 465 to 486 (SLRQ…LSGQ), 566 to 591 (TLLP…EKGE), and 636 to 695 (LGPP…LPPA). Positions 113-128 (TSRDTAYRTGSERREE) are enriched in basic and acidic residues. Over residues 133-153 (SDSTATLLNTRPLQDLSPSSS) the composition is skewed to polar residues. The stretch at 191–557 (RRKHCERHIQ…LQAMLQAHWE (367 aa)) forms a coiled coil. A required for centrosome localization region spans residues 360 to 887 (QEHQLKERLQ…SMRSRGGIWR (528 aa)). Residues 670–680 (TDDHRAERPFP) are compositionally biased toward basic and acidic residues. S782 carries the post-translational modification Phosphoserine. The segment at 824–887 (GTDGQGELVP…SMRSRGGIWR (64 aa)) is disordered. The span at 832–849 (VPRRNTDSRLGETTRKEI) shows a compositional bias: basic and acidic residues.

In terms of assembly, interacts with LYST.

The protein resides in the cytoplasm. The protein localises to the cytoskeleton. It is found in the microtubule organizing center. It localises to the centrosome. Its subcellular location is the centriole. Its function is as follows. Required for centriole duplication. Inhibition of centriole duplication leading to defects in cytokinesis. This Mus musculus (Mouse) protein is Centrobin (Cntrob).